The primary structure comprises 522 residues: Lysine--tRNA ligase (522 aa).

A 'HIGH' region motif is present at residues 44 to 52 (PSGLPHIGT). A 'KMSKS' region motif is present at residues 290 to 294 (KISKS). Lys-293 contacts ATP.

It belongs to the class-I aminoacyl-tRNA synthetase family.

Its subcellular location is the cytoplasm. The catalysed reaction is tRNA(Lys) + L-lysine + ATP = L-lysyl-tRNA(Lys) + AMP + diphosphate. The sequence is that of Lysine--tRNA ligase from Rickettsia peacockii (strain Rustic).